The sequence spans 319 residues: Aspartate carbamoyltransferase catalytic subunit (319 aa).

Carbamoyl phosphate-binding residues include arginine 65 and threonine 66. Lysine 93 contributes to the L-aspartate binding site. Positions 115, 149, and 152 each coordinate carbamoyl phosphate. Residues arginine 182 and arginine 237 each contribute to the L-aspartate site. 2 residues coordinate carbamoyl phosphate: glycine 278 and proline 279.

It belongs to the aspartate/ornithine carbamoyltransferase superfamily. ATCase family. Heterododecamer (2C3:3R2) of six catalytic PyrB chains organized as two trimers (C3), and six regulatory PyrI chains organized as three dimers (R2).

The catalysed reaction is carbamoyl phosphate + L-aspartate = N-carbamoyl-L-aspartate + phosphate + H(+). It participates in pyrimidine metabolism; UMP biosynthesis via de novo pathway; (S)-dihydroorotate from bicarbonate: step 2/3. In terms of biological role, catalyzes the condensation of carbamoyl phosphate and aspartate to form carbamoyl aspartate and inorganic phosphate, the committed step in the de novo pyrimidine nucleotide biosynthesis pathway. In Azoarcus sp. (strain BH72), this protein is Aspartate carbamoyltransferase catalytic subunit.